Here is a 223-residue protein sequence, read N- to C-terminus: UPF0641 membrane protein PJ4664.05 (223 aa).

5 helical membrane-spanning segments follow: residues 10 to 30, 49 to 69, 81 to 101, 146 to 166, and 190 to 210; these read FNSFILHTVATANLIWAFNWI, LTVLSLAVTLLSMVVGLFSDI, ILLYIVCPLETIVSILYWSIV, LSIGPSLLVYLSIAVSYMLWV, and TIFYTVASIISFSCYIVLKMV.

This sequence belongs to the UPF0641 family.

The protein resides in the endoplasmic reticulum membrane. The sequence is that of UPF0641 membrane protein PJ4664.05 from Schizosaccharomyces pombe (strain 972 / ATCC 24843) (Fission yeast).